The primary structure comprises 490 residues: GTPase Der (490 aa).

EngA-type G domains lie at 3 to 166 (PVVA…MDDV) and 203 to 376 (IKLA…DSST). Residues 9-16 (GRPNVGKS), 56-60 (DTGGI), 118-121 (NKTD), 209-216 (GRPNVGKS), 256-260 (DTAGV), and 321-324 (NKWD) each bind GTP. Residues 377-461 (RRVSTAMLTR…PIRIQFKEGE (85 aa)) enclose the KH-like domain.

This sequence belongs to the TRAFAC class TrmE-Era-EngA-EngB-Septin-like GTPase superfamily. EngA (Der) GTPase family. Associates with the 50S ribosomal subunit.

GTPase that plays an essential role in the late steps of ribosome biogenesis. The polypeptide is GTPase Der (Salmonella typhi).